Here is a 150-residue protein sequence, read N- to C-terminus: 3-hydroxyacyl-[acyl-carrier-protein] dehydratase FabZ (150 aa).

Residue His51 is part of the active site.

It belongs to the thioester dehydratase family. FabZ subfamily.

It is found in the cytoplasm. It catalyses the reaction a (3R)-hydroxyacyl-[ACP] = a (2E)-enoyl-[ACP] + H2O. Its function is as follows. Involved in unsaturated fatty acids biosynthesis. Catalyzes the dehydration of short chain beta-hydroxyacyl-ACPs and long chain saturated and unsaturated beta-hydroxyacyl-ACPs. In Legionella pneumophila subsp. pneumophila (strain Philadelphia 1 / ATCC 33152 / DSM 7513), this protein is 3-hydroxyacyl-[acyl-carrier-protein] dehydratase FabZ.